We begin with the raw amino-acid sequence, 271 residues long: Isoprenyl transferase (271 aa).

Residue Asp35 is part of the active site. Asp35 is a Mg(2+) binding site. Residues 36 to 39 (GNGR), Trp40, Arg48, His52, and 80 to 82 (STE) contribute to the substrate site. Asn83 serves as the catalytic Proton acceptor. Substrate is bound by residues Trp84, Arg86, Arg207, and 213-215 (RIS). Glu226 provides a ligand contact to Mg(2+).

The protein belongs to the UPP synthase family. As to quaternary structure, homodimer. Mg(2+) is required as a cofactor.

In terms of biological role, catalyzes the condensation of isopentenyl diphosphate (IPP) with allylic pyrophosphates generating different type of terpenoids. In Enterococcus faecalis (strain ATCC 700802 / V583), this protein is Isoprenyl transferase.